Here is a 729-residue protein sequence, read N- to C-terminus: DNA topoisomerase 3 (729 aa).

A Toprim domain is found at lysine 3–threonine 136. Residues glutamate 9 and aspartate 105 each coordinate Mg(2+). One can recognise a Topo IA-type catalytic domain in the interval tyrosine 153 to valine 594. The tract at residues asparagine 187–glutamine 192 is interaction with DNA. Catalysis depends on tyrosine 310, which acts as the O-(5'-phospho-DNA)-tyrosine intermediate. A compositionally biased stretch (basic and acidic residues) spans glutamate 686–glutamate 713. The interval glutamate 686–phenylalanine 719 is disordered.

The protein belongs to the type IA topoisomerase family. Mg(2+) serves as cofactor.

It carries out the reaction ATP-independent breakage of single-stranded DNA, followed by passage and rejoining.. Releases the supercoiling and torsional tension of DNA, which is introduced during the DNA replication and transcription, by transiently cleaving and rejoining one strand of the DNA duplex. Introduces a single-strand break via transesterification at a target site in duplex DNA. The scissile phosphodiester is attacked by the catalytic tyrosine of the enzyme, resulting in the formation of a DNA-(5'-phosphotyrosyl)-enzyme intermediate and the expulsion of a 3'-OH DNA strand. The free DNA strand then undergoes passage around the unbroken strand, thus removing DNA supercoils. Finally, in the religation step, the DNA 3'-OH attacks the covalent intermediate to expel the active-site tyrosine and restore the DNA phosphodiester backbone. This is DNA topoisomerase 3 from Bacillus cereus (strain ATCC 14579 / DSM 31 / CCUG 7414 / JCM 2152 / NBRC 15305 / NCIMB 9373 / NCTC 2599 / NRRL B-3711).